We begin with the raw amino-acid sequence, 213 residues long: Thymidine kinase (213 aa).

ATP-binding positions include 20–27 (GPMFSGKT) and 93–96 (DEAQ). Glu-94 acts as the Proton acceptor in catalysis. Zn(2+) is bound by residues Cys-150, Cys-153, Cys-185, and His-188.

Belongs to the thymidine kinase family. In terms of assembly, homotetramer.

The protein resides in the cytoplasm. It catalyses the reaction thymidine + ATP = dTMP + ADP + H(+). This Mycoplasma genitalium (strain ATCC 33530 / DSM 19775 / NCTC 10195 / G37) (Mycoplasmoides genitalium) protein is Thymidine kinase.